Consider the following 227-residue polypeptide: ATP-dependent dethiobiotin synthetase BioD (227 aa).

13 to 18 (EVGKSV) is a binding site for ATP. Position 17 (serine 17) interacts with Mg(2+). Residue lysine 38 is part of the active site. Position 42 (serine 42) interacts with substrate. ATP is bound by residues aspartate 55, 116 to 119 (EGAG), and 176 to 177 (ND). 2 residues coordinate Mg(2+): aspartate 55 and glutamate 116.

The protein belongs to the dethiobiotin synthetase family. As to quaternary structure, homodimer. Requires Mg(2+) as cofactor.

The protein localises to the cytoplasm. The catalysed reaction is (7R,8S)-7,8-diammoniononanoate + CO2 + ATP = (4R,5S)-dethiobiotin + ADP + phosphate + 3 H(+). It functions in the pathway cofactor biosynthesis; biotin biosynthesis; biotin from 7,8-diaminononanoate: step 1/2. In terms of biological role, catalyzes a mechanistically unusual reaction, the ATP-dependent insertion of CO2 between the N7 and N8 nitrogen atoms of 7,8-diaminopelargonic acid (DAPA, also called 7,8-diammoniononanoate) to form a ureido ring. The protein is ATP-dependent dethiobiotin synthetase BioD of Serratia marcescens.